A 270-amino-acid polypeptide reads, in one-letter code: Type III pantothenate kinase (270 aa).

Position 6–13 (6–13 (DVRNTHTV)) interacts with ATP. 109 to 112 (GADR) serves as a coordination point for substrate. D111 (proton acceptor) is an active-site residue. D131 is a binding site for K(+). ATP is bound at residue S134. T186 is a substrate binding site.

This sequence belongs to the type III pantothenate kinase family. As to quaternary structure, homodimer. It depends on NH4(+) as a cofactor. K(+) is required as a cofactor.

The protein resides in the cytoplasm. The enzyme catalyses (R)-pantothenate + ATP = (R)-4'-phosphopantothenate + ADP + H(+). It functions in the pathway cofactor biosynthesis; coenzyme A biosynthesis; CoA from (R)-pantothenate: step 1/5. Catalyzes the phosphorylation of pantothenate (Pan), the first step in CoA biosynthesis. In Mycolicibacterium gilvum (strain PYR-GCK) (Mycobacterium gilvum (strain PYR-GCK)), this protein is Type III pantothenate kinase.